The following is a 493-amino-acid chain: Glutamyl-tRNA(Gln) amidotransferase subunit A (493 aa).

Catalysis depends on charge relay system residues Lys79 and Ser159. Ser183 serves as the catalytic Acyl-ester intermediate.

This sequence belongs to the amidase family. GatA subfamily. In terms of assembly, heterotrimer of A, B and C subunits.

The enzyme catalyses L-glutamyl-tRNA(Gln) + L-glutamine + ATP + H2O = L-glutaminyl-tRNA(Gln) + L-glutamate + ADP + phosphate + H(+). Functionally, allows the formation of correctly charged Gln-tRNA(Gln) through the transamidation of misacylated Glu-tRNA(Gln) in organisms which lack glutaminyl-tRNA synthetase. The reaction takes place in the presence of glutamine and ATP through an activated gamma-phospho-Glu-tRNA(Gln). This Rhizobium meliloti (strain 1021) (Ensifer meliloti) protein is Glutamyl-tRNA(Gln) amidotransferase subunit A.